Here is a 1019-residue protein sequence, read N- to C-terminus: DNA topoisomerase 1 (1019 aa).

Residues 1–160 are disordered; sequence MNSIQVKNEP…KTMSITGSGE (160 aa). Residues 46-56 show a composition bias toward basic and acidic residues; sequence KPLAKRPKVED. Over residues 62–78 the composition is skewed to polar residues; it reads PLTSTVSSQNGVQKRSG. Acidic residues-rich tracts occupy residues 83-93 and 107-136; these read DDNDDDSDSDS and SDDD…DDDD. Interaction with DNA stretches follow at residues 379–380, 442–447, and 556–558; these read KY, RAGNEK, and SAK. The Topo IB-type catalytic domain occupies 386-860; the sequence is TSNFKTNSDR…KKVKKEEEEN (475 aa). The tract at residues 716-737 is disordered; the sequence is EQKGLTGDDGTPKKGKKAKNVE. The active-site O-(3'-phospho-DNA)-tyrosine intermediate is the Y822. 2 disordered regions span residues 843 to 890 and 940 to 1019; these read GQGK…TGDS and MRKL…AAVV. The segment covering 854 to 863 has biased composition (basic and acidic residues); it reads KKEEEENDIK. Over residues 864-879 the composition is skewed to basic residues; the sequence is PKKKDAKGAASKKRAA. 2 stretches are compositionally biased toward basic and acidic residues: residues 940-950 and 980-996; these read MRKLDSAERKG and TSAD…VDKT. Residues 997 to 1012 show a composition bias toward acidic residues; that stretch reads EESDDDLSSDSSDDED.

The protein belongs to the type IB topoisomerase family. Monomer.

It catalyses the reaction ATP-independent breakage of single-stranded DNA, followed by passage and rejoining.. Its function is as follows. Releases the supercoiling and torsional tension of DNA introduced during the DNA replication and transcription by transiently cleaving and rejoining one strand of the DNA duplex. Introduces a single-strand break via transesterification at a target site in duplex DNA. The scissile phosphodiester is attacked by the catalytic tyrosine of the enzyme, resulting in the formation of a DNA-(3'-phosphotyrosyl)-enzyme intermediate and the expulsion of a 5'-OH DNA strand. The free DNA strand then rotates around the intact phosphodiester bond on the opposing strand, thus removing DNA supercoils. Finally, in the religation step, the DNA 5'-OH attacks the covalent intermediate to expel the active-site tyrosine and restore the DNA phosphodiester backbone. The chain is DNA topoisomerase 1 (TOP1) from Mycosarcoma maydis (Corn smut fungus).